The primary structure comprises 384 residues: Probable endopolygalacturonase C (384 aa).

Residues 1-19 form the signal peptide; that stretch reads MVRQLALACGLLAAVAVQA. The propeptide occupies 20–40; sequence APAEPAHPMVTEAPDASLLHK. Residues cysteine 45 and cysteine 63 are joined by a disulfide bond. PbH1 repeat units lie at residues 176-207 and 208-229; these read ATDL…DIGE and STDI…AINS. Catalysis depends on aspartate 222, which acts as the Proton donor. Cysteine 224 and cysteine 240 form a disulfide bridge. The active site involves histidine 244. 2 PbH1 repeats span residues 254–280 and 288–310; these read RDDN…RIKA and ISDI…VIEQ. Residue asparagine 261 is glycosylated (N-linked (GlcNAc...) asparagine). Disulfide bonds link cysteine 349–cysteine 354 and cysteine 373–cysteine 382.

It belongs to the glycosyl hydrolase 28 family.

It localises to the secreted. The enzyme catalyses (1,4-alpha-D-galacturonosyl)n+m + H2O = (1,4-alpha-D-galacturonosyl)n + (1,4-alpha-D-galacturonosyl)m.. Its function is as follows. Involved in maceration and soft-rotting of plant tissue. Hydrolyzes the 1,4-alpha glycosidic bonds of de-esterified pectate in the smooth region of the plant cell wall. The chain is Probable endopolygalacturonase C (pgaC) from Aspergillus aculeatus.